The chain runs to 1015 residues: GTPase-activating Rap/Ran-GAP domain-like protein 3 (1015 aa).

The 217-residue stretch at 200-416 (LLVLEEQEGS…RTLDMLIRSL (217 aa)) folds into the Rap-GAP domain. One can recognise a CNH domain in the interval 498-812 (PYDIVCGDSW…QLTASRSDIY (315 aa)). Disordered stretches follow at residues 821-842 (SASNCSSRDTSSQSSPQTPTGY) and 924-1004 (ELLG…FTFS). The segment covering 823–835 (SNCSSRDTSSQSS) has biased composition (low complexity). Residues 949 to 959 (KNKEEEQKRTA) show a composition bias toward basic and acidic residues.

It belongs to the GARNL3 family.

This chain is GTPase-activating Rap/Ran-GAP domain-like protein 3 (garnl3), found in Danio rerio (Zebrafish).